We begin with the raw amino-acid sequence, 645 residues long: Sodium/hydrogen exchanger 9 (645 aa).

Residues 1 to 20 (MERQSRVMSEKDEYQFQHQG) are Lumenal-facing. A helical membrane pass occupies residues 21–41 (AVELLVFNFLLILTILTIWLF). Residues 42-45 (KNHR) lie on the Cytoplasmic side of the membrane. The chain crosses the membrane as a helical span at residues 46 to 66 (FRFLHETGGAMVYGLIMGLIL). Residues 67–126 (RYATAPTDIESGTVYDCVKLTFSPSTLLVNITDQVYEYKYKREISQHNINPHQGNAILEK) are Lumenal-facing. N-linked (GlcNAc...) asparagine glycosylation occurs at Asn-96. A helical transmembrane segment spans residues 127–147 (MTFDPEIFFNVLLPPIIFHAG). At 148 to 164 (YSLKKRHFFQNLGSILT) the chain is on the cytoplasmic side. Residues 165–185 (YAFLGTAISCIVIGLIMYGFV) traverse the membrane as a helical segment. Residues 186–203 (KAMIHAGQLKNGDFHFTD) are Lumenal-facing. The helical transmembrane segment at 204 to 224 (CLFFGSLMSATDPVTVLAIFH) threads the bilayer. The Cytoplasmic portion of the chain corresponds to 225-235 (ELHVDPDLYTL). A helical transmembrane segment spans residues 236–256 (LFGESVLNDAVAIVLTYSISI). Residues 257-277 (YSPKENPNAFDAAAFFQSVGN) are Lumenal-facing. Residues 278–298 (FLGIFAGSFAMGSAYAIITAL) traverse the membrane as a helical segment. Topologically, residues 299–301 (LTK) are cytoplasmic. Helical transmembrane passes span 302–322 (FTKLCEFPMLETGLFFLLSWS) and 323–343 (AFLSAEAAGLTGIVAVLFCGV). The Cytoplasmic segment spans residues 344 to 364 (TQAHYTYNNLSSDSKIRTKQL). The chain crosses the membrane as a helical span at residues 365 to 385 (FEFMNFLAENVIFCYMGLALF). Position 386 (Thr-386) is a topological domain, lumenal. The chain crosses the membrane as a helical span at residues 387–407 (FQNHIFNALFILGAFLAIFVA). Residues 408 to 429 (RACNIYPLSFLLNLGRKQKIPW) are Cytoplasmic-facing. A helical transmembrane segment spans residues 430 to 450 (NFQHMMMFSGLRGAIAFALAI). Residues 451-465 (RNTESQPKQMMFTTT) are Lumenal-facing. The chain crosses the membrane as a helical span at residues 466 to 486 (LLLVFFTVWVFGGGTTPMLTW). Residues 487–645 (LQIRVGVDLD…EQTLGQSQLN (159 aa)) lie on the Cytoplasmic side of the membrane. The disordered stretch occupies residues 594-622 (QASSPCSPPARLGLDQKASPQTPGKENIY).

Belongs to the monovalent cation:proton antiporter 1 (CPA1) transporter (TC 2.A.36) family. In terms of assembly, homodimer; phosphatidylinositol-4,5-bisphosphate (PIP2) and phosphatidylinositol 3,4,5-trisphosphate (PIP3) could be involved in the dimer stabilization. Interacts (via the C-terminus) with RACK1. Interacts with CHP1. In terms of tissue distribution, ubiquitously expressed in all tissues tested. Expressed at highest levels in heart and skeletal muscle, followed by placenta, kidney, and liver. Expressed in the brain, in the medulla and spinal cord.

It is found in the late endosome membrane. The protein localises to the early endosome membrane. It localises to the recycling endosome membrane. The protein resides in the cell membrane. Its subcellular location is the cytoplasmic vesicle. It is found in the phagosome membrane. It catalyses the reaction Na(+)(in) + H(+)(out) = Na(+)(out) + H(+)(in). It carries out the reaction K(+)(in) + H(+)(out) = K(+)(out) + H(+)(in). Functionally, endosomal Na(+), K(+)/H(+) antiporter. Mediates the electroneutral exchange of endosomal luminal H(+) for a cytosolic Na(+) or K(+). By facilitating proton efflux, SLC9A9 counteracts the acidity generated by vacuolar (V)-ATPase, thereby limiting luminal acidification. Regulates organellar pH and consequently, e.g., endosome maturation and endocytic trafficking of plasma membrane receptors and neurotransporters. Promotes the recycling of transferrin receptors back to the cell surface to facilitate additional iron uptake in the brain. Regulates synaptic transmission by regulating the luminal pH of axonal endosomes. Regulates phagosome lumenal pH, thus affecting phagosome maturation, and consequently, microbicidal activity in macrophages. Can also be active at the cell surface of specialized cells, e.g., in the inner ear hair bundles uses the high K(+) of the endolymph to regulate intracelular pH. This is Sodium/hydrogen exchanger 9 from Homo sapiens (Human).